A 451-amino-acid polypeptide reads, in one-letter code: Exodeoxyribonuclease 7 large subunit (451 aa).

Belongs to the XseA family. Heterooligomer composed of large and small subunits.

It localises to the cytoplasm. It catalyses the reaction Exonucleolytic cleavage in either 5'- to 3'- or 3'- to 5'-direction to yield nucleoside 5'-phosphates.. Bidirectionally degrades single-stranded DNA into large acid-insoluble oligonucleotides, which are then degraded further into small acid-soluble oligonucleotides. The protein is Exodeoxyribonuclease 7 large subunit of Neisseria meningitidis serogroup B (strain ATCC BAA-335 / MC58).